The following is a 571-amino-acid chain: Glutamate--tRNA ligase (571 aa).

The 'HIGH' region signature appears at 38–48; that stretch reads PSPTGFMHIGG. Residues 316–320 carry the 'KMSKS' region motif; sequence KLSKR. Residue lysine 319 participates in ATP binding.

Belongs to the class-I aminoacyl-tRNA synthetase family. Glutamate--tRNA ligase type 1 subfamily. As to quaternary structure, monomer.

The protein resides in the cytoplasm. It carries out the reaction tRNA(Glu) + L-glutamate + ATP = L-glutamyl-tRNA(Glu) + AMP + diphosphate. Its function is as follows. Catalyzes the attachment of glutamate to tRNA(Glu) in a two-step reaction: glutamate is first activated by ATP to form Glu-AMP and then transferred to the acceptor end of tRNA(Glu). This is Glutamate--tRNA ligase from Sorangium cellulosum (strain So ce56) (Polyangium cellulosum (strain So ce56)).